The following is a 638-amino-acid chain: 1-deoxy-D-xylulose-5-phosphate synthase (638 aa).

Residues His-78 and 119 to 121 (GHS) contribute to the thiamine diphosphate site. Asp-151 is a Mg(2+) binding site. Thiamine diphosphate contacts are provided by residues 152 to 153 (GA), Asn-180, Tyr-289, and Glu-371. Asn-180 provides a ligand contact to Mg(2+).

Belongs to the transketolase family. DXPS subfamily. Homodimer. Mg(2+) serves as cofactor. The cofactor is thiamine diphosphate.

The catalysed reaction is D-glyceraldehyde 3-phosphate + pyruvate + H(+) = 1-deoxy-D-xylulose 5-phosphate + CO2. The protein operates within metabolic intermediate biosynthesis; 1-deoxy-D-xylulose 5-phosphate biosynthesis; 1-deoxy-D-xylulose 5-phosphate from D-glyceraldehyde 3-phosphate and pyruvate: step 1/1. Its function is as follows. Catalyzes the acyloin condensation reaction between C atoms 2 and 3 of pyruvate and glyceraldehyde 3-phosphate to yield 1-deoxy-D-xylulose-5-phosphate (DXP). The polypeptide is 1-deoxy-D-xylulose-5-phosphate synthase (Bartonella bacilliformis (strain ATCC 35685 / KC583 / Herrer 020/F12,63)).